An 808-amino-acid polypeptide reads, in one-letter code: Homeobox-leucine zipper protein HDG1 (808 aa).

Residues 57–121 (LQTNGEMSRN…KRYHRHTPKQ (65 aa)) form a disordered region. A compositionally biased stretch (basic and acidic residues) spans 79–90 (SRGEDVESRSES). The segment covering 108–119 (LKKKKRYHRHTP) has biased composition (basic residues). The homeobox DNA-binding region spans 110 to 169 (KKKRYHRHTPKQIQDLESVFKECAHPDEKQRLDLSRRLNLDPRQVKFWFQNRRTQMKTQI). The stretch at 158–233 (FQNRRTQMKT…SRLKDELDRV (76 aa)) forms a coiled coil. In terms of domain architecture, START spans 310–541 (DFDQRSRYLD…LQRQCECLTI (232 aa)).

Belongs to the HD-ZIP homeobox family. Class IV subfamily. In terms of assembly, interacts with CFL1. Binds with BBM. In terms of tissue distribution, expressed in trichomes forming at the base of young leaves, in endodermal cell lines around emergent lateral roots and in the epidermal layer of the stamen filament.

The protein localises to the nucleus. Probable transcription factor. Promotes cuticle development probably by modulating the expression of the downstream genes BDG and FDH, possibly repressed in a CFL1-dependent manner. Involved, together with PDF2, in the regulation of flower organs development by promoting the expression of APETALA 3 (AP3) in the epidermis and internal cell layers of developing flowers. In opposition to BBM, seems to promote cell differentiation and giant cell identity via transcriptional repression of meristem and cell proliferation genes. The polypeptide is Homeobox-leucine zipper protein HDG1 (Arabidopsis thaliana (Mouse-ear cress)).